The chain runs to 256 residues: Peroxisomal membrane protein PMP30A (256 aa).

This sequence belongs to the peroxin-11 family.

The protein resides in the peroxisome membrane. Its function is as follows. Involved in peroxisomal proliferation. Could participate in peroxisomal elongation or fission. May be involved in parceling of peroxisomes into regular quanta. This chain is Peroxisomal membrane protein PMP30A (PEX11A), found in Candida boidinii (Yeast).